A 776-amino-acid polypeptide reads, in one-letter code: Chitin synthase 1 (776 aa).

6 helical membrane passes run 451–471 (LVSL…FYFL), 487–507 (FWIF…LFIV), 523–543 (LIIL…VFVI), 558–578 (VLVS…LMSI), 695–714 (VVLF…VQVY), and 723–743 (IYLA…AIGS).

Belongs to the chitin synthase family.

It is found in the cell membrane. The catalysed reaction is [(1-&gt;4)-N-acetyl-beta-D-glucosaminyl](n) + UDP-N-acetyl-alpha-D-glucosamine = [(1-&gt;4)-N-acetyl-beta-D-glucosaminyl](n+1) + UDP + H(+). With respect to regulation, requires proteolytic activation. Its function is as follows. Polymerizes chitin, a structural polymer of the cell wall and septum, by transferring the sugar moiety of UDP-GlcNAc to the non-reducing end of the growing chitin polymer. Also involved in forming cross walls in the hyphal phase. In Candida albicans (Yeast), this protein is Chitin synthase 1 (CHS1).